We begin with the raw amino-acid sequence, 400 residues long: Nicotinate phosphoribosyltransferase (400 aa).

At histidine 220 the chain carries Phosphohistidine; by autocatalysis.

This sequence belongs to the NAPRTase family. Post-translationally, transiently phosphorylated on a His residue during the reaction cycle. Phosphorylation strongly increases the affinity for substrates and increases the rate of nicotinate D-ribonucleotide production. Dephosphorylation regenerates the low-affinity form of the enzyme, leading to product release.

The enzyme catalyses nicotinate + 5-phospho-alpha-D-ribose 1-diphosphate + ATP + H2O = nicotinate beta-D-ribonucleotide + ADP + phosphate + diphosphate. Its pathway is cofactor biosynthesis; NAD(+) biosynthesis; nicotinate D-ribonucleotide from nicotinate: step 1/1. In terms of biological role, catalyzes the synthesis of beta-nicotinate D-ribonucleotide from nicotinate and 5-phospho-D-ribose 1-phosphate at the expense of ATP. This is Nicotinate phosphoribosyltransferase from Shigella dysenteriae serotype 1 (strain Sd197).